A 440-amino-acid polypeptide reads, in one-letter code: L-seryl-tRNA(Sec) selenium transferase (440 aa).

Position 282 is an N6-(pyridoxal phosphate)lysine (Lys282).

It belongs to the SelA family. Requires pyridoxal 5'-phosphate as cofactor.

The protein localises to the cytoplasm. It catalyses the reaction L-seryl-tRNA(Sec) + selenophosphate + H(+) = L-selenocysteinyl-tRNA(Sec) + phosphate. It participates in aminoacyl-tRNA biosynthesis; selenocysteinyl-tRNA(Sec) biosynthesis; selenocysteinyl-tRNA(Sec) from L-seryl-tRNA(Sec) (bacterial route): step 1/1. Its function is as follows. Converts seryl-tRNA(Sec) to selenocysteinyl-tRNA(Sec) required for selenoprotein biosynthesis. This Campylobacter jejuni subsp. jejuni serotype O:6 (strain 81116 / NCTC 11828) protein is L-seryl-tRNA(Sec) selenium transferase.